Consider the following 215-residue polypeptide: Oligoribonuclease (215 aa).

Residues 5 to 170 enclose the Exonuclease domain; the sequence is LVWIDCEMTG…ADIHESIREL (166 aa). Residue Tyr127 is part of the active site. Residues 196-215 form a disordered region; that stretch reads LDEGKDAPGPSDSASAPPTG. Residues 202-215 are compositionally biased toward low complexity; sequence APGPSDSASAPPTG.

It belongs to the oligoribonuclease family.

The protein localises to the cytoplasm. In terms of biological role, 3'-to-5' exoribonuclease specific for small oligoribonucleotides. This Mycolicibacterium paratuberculosis (strain ATCC BAA-968 / K-10) (Mycobacterium paratuberculosis) protein is Oligoribonuclease.